The primary structure comprises 169 residues: Cytochrome c oxidase subunit 4 isoform 1, mitochondrial (169 aa).

The transit peptide at 1-22 (MLASRALSLIGKRAISTSVCLR) directs the protein to the mitochondrion. Over 23–99 (AHGSVVKSED…FAEMNRGTNE (77 aa)) the chain is Mitochondrial matrix. Lys-29 carries the N6-acetyllysine; alternate modification. At Lys-29 the chain carries N6-succinyllysine; alternate. Residues Ser-56 and Ser-58 each carry the phosphoserine modification. N6-acetyllysine; alternate is present on Lys-60. Lys-60 bears the N6-succinyllysine; alternate mark. Lys-67 is modified (N6-acetyllysine). Residues 100-125 (WKTVVGMAMFFIGFTALVLIWEKSYV) form a helical membrane-spanning segment. At 126–169 (YGPIPHTFDRDWVAMQTKRMLDMKANPIQGFSAKWDYDKNEWKK) the chain is on the mitochondrial intermembrane side.

The protein belongs to the cytochrome c oxidase IV family. In terms of assembly, component of the cytochrome c oxidase (complex IV, CIV), a multisubunit enzyme composed of 14 subunits. The complex is composed of a catalytic core of 3 subunits MT-CO1, MT-CO2 and MT-CO3, encoded in the mitochondrial DNA, and 11 supernumerary subunits COX4I, COX5A, COX5B, COX6A, COX6B, COX6C, COX7A, COX7B, COX7C, COX8 and NDUFA4, which are encoded in the nuclear genome. The complex exists as a monomer or a dimer and forms supercomplexes (SCs) in the inner mitochondrial membrane with NADH-ubiquinone oxidoreductase (complex I, CI) and ubiquinol-cytochrome c oxidoreductase (cytochrome b-c1 complex, complex III, CIII), resulting in different assemblies (supercomplex SCI(1)III(2)IV(1) and megacomplex MCI(2)III(2)IV(2)). Interacts with PHB2; the interaction decreases in absence of SPHK2. Interacts with AFG1L. Interacts with ABCB7; this interaction allows the regulation of cellular iron homeostasis and cellular reactive oxygen species (ROS) levels in cardiomyocytes. Interacts with FLVCR2; this interaction occurs in the absence of heme and is disrupted upon heme binding. Interacts with IRGC.

The protein localises to the mitochondrion inner membrane. It functions in the pathway energy metabolism; oxidative phosphorylation. Its function is as follows. Component of the cytochrome c oxidase, the last enzyme in the mitochondrial electron transport chain which drives oxidative phosphorylation. The respiratory chain contains 3 multisubunit complexes succinate dehydrogenase (complex II, CII), ubiquinol-cytochrome c oxidoreductase (cytochrome b-c1 complex, complex III, CIII) and cytochrome c oxidase (complex IV, CIV), that cooperate to transfer electrons derived from NADH and succinate to molecular oxygen, creating an electrochemical gradient over the inner membrane that drives transmembrane transport and the ATP synthase. Cytochrome c oxidase is the component of the respiratory chain that catalyzes the reduction of oxygen to water. Electrons originating from reduced cytochrome c in the intermembrane space (IMS) are transferred via the dinuclear copper A center (CU(A)) of subunit 2 and heme A of subunit 1 to the active site in subunit 1, a binuclear center (BNC) formed by heme A3 and copper B (CU(B)). The BNC reduces molecular oxygen to 2 water molecules using 4 electrons from cytochrome c in the IMS and 4 protons from the mitochondrial matrix. This Mus musculus (Mouse) protein is Cytochrome c oxidase subunit 4 isoform 1, mitochondrial (Cox4i1).